Consider the following 489-residue polypeptide: Pluviatolide synthase (489 aa).

Residues 6–26 traverse the membrane as a helical segment; it reads SVLGLSSTLIIALAITVIFLL. Cysteine 432 serves as a coordination point for heme.

It belongs to the cytochrome P450 family. Requires heme as cofactor.

It localises to the membrane. It carries out the reaction (-)-matairesinol + reduced [NADPH--hemoprotein reductase] + O2 = (-)-pluviatolide + oxidized [NADPH--hemoprotein reductase] + 2 H2O + H(+). Its pathway is aromatic compound metabolism; phenylpropanoid biosynthesis. Its function is as follows. Cytochrome P450 involved in the biosynthesis of etoposide, a chemotherapeutic compound of the topoisomerase inhibitor family. Catalyzes the conversion of matairesinol to pluviatolide. This Podophyllum peltatum (American mandrake) protein is Pluviatolide synthase.